The primary structure comprises 245 residues: Phosducin (245 aa).

The disordered stretch occupies residues 1–70 (MEKAKSQSLE…DKDSKERFSR (70 aa)). The 244-residue stretch at 1–244 (MEKAKSQSLE…LEQTNMEEDM (244 aa)) folds into the Phosducin domain. 2 stretches are compositionally biased toward basic and acidic residues: residues 28–50 (DWRKFKLESEDSDSVAHSKKEIL) and 58–69 (SRDDKDSKERFS). Residue Ser-73 is modified to Phosphoserine; by PKA. The interval 111–245 (YGFVYELESG…EQTNMEEDME (135 aa)) is thioredoxin fold.

Belongs to the phosducin family. As to quaternary structure, interacts with CRX. Forms a complex with the beta and gamma subunits of the GTP-binding protein, transducin. Post-translationally, light-induced changes in cyclic nucleotide levels modulate the phosphorylation of this protein by cAMP kinase.

Its subcellular location is the cytoplasm. The protein resides in the cytosol. The protein localises to the nucleus. It localises to the cell projection. It is found in the cilium. Its subcellular location is the photoreceptor outer segment. The protein resides in the photoreceptor inner segment. Inhibits the transcriptional activation activity of the cone-rod homeobox CRX. May participate in the regulation of visual phototransduction or in the integration of photoreceptor metabolism. This chain is Phosducin (PDC), found in Bos taurus (Bovine).